A 313-amino-acid polypeptide reads, in one-letter code: Beta-ketoacyl-[acyl-carrier-protein] synthase III (313 aa).

Residues cysteine 112 and histidine 238 contribute to the active site. An ACP-binding region spans residues 239-243; it reads QANIR. The active site involves asparagine 268.

The protein belongs to the thiolase-like superfamily. FabH family. In terms of assembly, homodimer.

Its subcellular location is the cytoplasm. The enzyme catalyses malonyl-[ACP] + acetyl-CoA + H(+) = 3-oxobutanoyl-[ACP] + CO2 + CoA. It functions in the pathway lipid metabolism; fatty acid biosynthesis. Its function is as follows. Catalyzes the condensation reaction of fatty acid synthesis by the addition to an acyl acceptor of two carbons from malonyl-ACP. Catalyzes the first condensation reaction which initiates fatty acid synthesis and may therefore play a role in governing the total rate of fatty acid production. Possesses both acetoacetyl-ACP synthase and acetyl transacylase activities. Its substrate specificity determines the biosynthesis of branched-chain and/or straight-chain of fatty acids. The sequence is that of Beta-ketoacyl-[acyl-carrier-protein] synthase III from Staphylococcus haemolyticus (strain JCSC1435).